We begin with the raw amino-acid sequence, 2768 residues long: Thyroglobulin (2768 aa).

The signal sequence occupies residues Met1–Ala19. Tyr24 is subject to Iodotyrosine; alternate. Tyr24 is modified (sulfotyrosine; alternate). Tyr24 bears the Thyroxine; alternate mark. Triiodothyronine; alternate is present on Tyr24. 4 Thyroglobulin type-1 domains span residues Leu31–Cys92, Leu93–Cys160, Pro161–Cys297, and Pro298–Cys358. Cystine bridges form between Cys34–Cys52, Cys63–Cys70, Cys72–Cys92, Cys96–Cys120, Cys131–Cys138, Cys140–Cys160, Cys164–Cys183, Cys194–Cys235, Cys237–Cys297, Cys301–Cys319, Cys330–Cys336, Cys338–Cys358, Cys364–Cys620, Cys408–Cys608, Cys631–Cys636, Cys638–Cys658, Cys662–Cys687, and Cys698–Cys703. N-linked (GlcNAc...) asparagine glycosylation is present at Asn76. Tyr108 is modified (iodotyrosine). Asn110 carries N-linked (GlcNAc...) asparagine glycosylation. Tyr149 carries the post-translational modification Iodotyrosine; alternate. At Tyr149 the chain carries Diiodotyrosine; alternate. Asn198 carries N-linked (GlcNAc...) asparagine glycosylation. Iodotyrosine is present on residues Tyr234 and Tyr258. N-linked (GlcNAc...) asparagine glycosylation is found at Asn484 and Asn529. Residues Pro521–Asn545 form a disordered region. 6 consecutive Thyroglobulin type-1 domains span residues Ser605–Cys658, Pro659–Cys726, Pro727–Cys921, Pro922–Cys1073, Pro1074–Cys1145, and Pro1146–Cys1210. The residue at position 704 (Tyr704) is an Iodotyrosine; alternate. Tyr704 is subject to Thyroxine; alternate. A Triiodothyronine; alternate modification is found at Tyr704. The residue at position 704 (Tyr704) is a Diiodotyrosine; alternate. Intrachain disulfides connect Cys705-Cys726, Cys730-Cys763, Cys774-Cys898, Cys900-Cys921, Cys925-Cys1031, Cys1042-Cys1049, Cys1051-Cys1073, Cys1077-Cys1108, Cys1126-Cys1145, Cys1149-Cys1169, Cys1181-Cys1188, Cys1190-Cys1210, Cys1215-Cys1264, Cys1231-Cys1245, Cys1306-Cys1356, and Cys1331-Cys1347. The N-linked (GlcNAc...) asparagine glycan is linked to Asn748. Tyr785 is modified (iodotyrosine). Residue Asn816 is glycosylated (N-linked (GlcNAc...) asparagine). The residue at position 866 (Tyr866) is an Iodotyrosine; alternate. At Tyr866 the chain carries Diiodotyrosine; alternate. A Diiodotyrosine modification is found at Tyr883. N-linked (GlcNAc...) asparagine glycosylation occurs at Asn947. Tyr992 carries the post-translational modification Iodotyrosine; alternate. A Diiodotyrosine; alternate modification is found at Tyr992. N-linked (GlcNAc...) asparagine glycosylation occurs at Asn1220. An Iodotyrosine modification is found at Tyr1310. The residue at position 1310 (Tyr1310) is a Thyroxine. 3 N-linked (GlcNAc...) asparagine glycosylation sites follow: Asn1348, Asn1349, and Asn1365. 9 disulfides stabilise this stretch: Cys1440/Cys1459, Cys1462/Cys1473, Cys1476/Cys1490, Cys1493/Cys1510, Cys1514/Cys1523, Cys1543/Cys1565, Cys1603/Cys1627, Cys1607/Cys1613, and Cys1639/Cys1662. Type II repeat units lie at residues Gly1456–Gln1469, Asp1470–Gly1486, and Ser1487–Gly1503. Residue Tyr1467 is modified to Iodotyrosine; alternate. Tyr1467 carries the diiodotyrosine; alternate modification. Positions Val1511 to Cys1565 constitute a Thyroglobulin type-1 11 domain. A Type IIIA repeat occupies Cys1603–Phe1723. Residue Asn1716 is glycosylated (N-linked (GlcNAc...) asparagine). 4 disulfides stabilise this stretch: Cys1724–Cys1749, Cys1728–Cys1734, Cys1733–Cys1835, and Cys1760–Cys1777. The Type IIIB repeat unit spans residues Cys1724 to Trp1892. 2 N-linked (GlcNAc...) asparagine glycosylation sites follow: Asn1774 and Asn1869. Cystine bridges form between Cys1893–Cys1919, Cys1897–Cys1904, Cys1928–Cys1939, Cys1996–Cys2024, Cys2000–Cys2006, Cys2005–Cys2076, and Cys2035–Cys2048. One copy of the Type IIIA repeat lies at Cys1893–Glu1995. The Type IIIB repeat unit spans residues Cys1996–Leu2129. N-linked (GlcNAc...) asparagine glycosylation occurs at Asn2013. N-linked (GlcNAc...) asparagine glycosylation is present at Asn2122. Cystine bridges form between Cys2130-Cys2154, Cys2134-Cys2140, and Cys2163-Cys2172. The Type IIIA repeat unit spans residues Cys2130–Pro2187. Tyr2184 carries the iodotyrosine modification. A cholinesterase-like (ChEL) region spans residues Gly2188–Lys2768. N-linked (GlcNAc...) asparagine glycosylation occurs at Asn2250. A disulfide bond links Cys2264 and Cys2281. An N-linked (GlcNAc...) asparagine glycan is attached at Asn2295. Cys2442 and Cys2453 are oxidised to a cystine. The residue at position 2540 (Tyr2540) is an Iodotyrosine. Iodotyrosine; alternate is present on Tyr2573. Tyr2573 bears the Thyroxine; alternate mark. Position 2573 is a triiodothyronine; alternate (Tyr2573). The residue at position 2573 (Tyr2573) is a Diiodotyrosine; alternate. Asn2582 is a glycosylation site (N-linked (GlcNAc...) asparagine). An iodotyrosine mark is found at Tyr2587 and Tyr2617. An intrachain disulfide couples Cys2591 to Cys2715. Tyr2697 bears the Diiodotyrosine mark. Residues Thr2727–Lys2768 form a disordered region. Ser2749 carries an O-linked (Xyl...) (chondroitin sulfate) serine glycan. Tyr2766 is subject to Iodotyrosine; alternate. Thyroxine; alternate is present on Tyr2766. The residue at position 2766 (Tyr2766) is a Triiodothyronine; alternate. Diiodotyrosine; alternate is present on Tyr2766.

The protein belongs to the type-B carboxylesterase/lipase family. Monomer. Homodimer (via ChEL region); occurs in the endoplasmic reticulum and is required for export to the Golgi apparatus. Homooligomer; disulfide-linked; stored in this form in the thyroid follicle lumen. Post-translationally, iodinated on tyrosine residues by TPO. There are 4 pairs of iodinated tyrosines used for coupling: acceptor Tyr-24 is coupled to donor Tyr-149 or Tyr-234, acceptor Tyr-2573 is coupled to donor Tyr-2540, acceptor Tyr-2766 in monomer 1 is coupled to donor Tyr-2766 in monomer 2 and acceptor Tyr-1310 in monomer 1 is coupled to donor Tyr-108 in monomer 2. Sulfated tyrosines are desulfated during iodination. In terms of processing, undergoes sequential proteolysis by cathepsins to release thyroxine (T4) and triiodothyronine (T3) hormones. In the thyroid follicle lumen, cross-linked TG (storage form) is solubilized by limited proteolysis mediated by cathepsins CTSB and/or CTSL. Partially cleaved TG is further processed by CTSK/cathepsin K and/or CTSL resulting in the release of T4. Following endocytosis, further processing occurs leading to the release of T3 and more T4 hormones. As to expression, specifically expressed in the thyroid gland.

It localises to the secreted. Its function is as follows. Acts as a substrate for the production of iodinated thyroid hormones thyroxine (T4) and triiodothyronine (T3). The synthesis of T3 and T4 involves iodination of selected tyrosine residues of TG/thyroglobulin followed by their oxidative coupling in the thyroid follicle lumen. Following TG re-internalization and lysosomal-mediated proteolysis, T3 and T4 are released from the polypeptide backbone leading to their secretion into the bloodstream. One dimer produces 7 thyroid hormone molecules. The protein is Thyroglobulin of Homo sapiens (Human).